The primary structure comprises 272 residues: MKIQILCFTTLFLAIFTSQVTTAYKFKFDYFGNGTDPISFHGDAEYGPDTDGKSRSGAIALTRDNIPFSHGRAIFTTPITFKPNASALYPFKTSFTFSITPKTNPNQGHGLAFIVVPSNQNDAGSGLGYLSLLNRTNNGNPNNHLFAVEFDVFQDKSLGDMNDNHVGIDINSVDSVVSVKSGYWVMTRSGWLFKDLKLSSGDRYKAWIEYNNNYKVVSVTIGLAHLKKPNRPLIEAKFDLSKVIHEVMYTGFAGSMGRGVERHEIWDWTFQN.

The N-terminal stretch at 1–23 (MKIQILCFTTLFLAIFTSQVTTA) is a signal peptide. Residues 24-271 (YKFKFDYFGN…RHEIWDWTFQ (248 aa)) form a legume-lectin like region. N33, N84, and N134 each carry an N-linked (GlcNAc...) asparagine glycan. Phosphoserine is present on S241.

This sequence belongs to the leguminous lectin family.

The protein localises to the secreted. Its subcellular location is the extracellular space. The protein resides in the apoplast. This chain is Lectin-like protein At1g53070, found in Arabidopsis thaliana (Mouse-ear cress).